The following is a 300-amino-acid chain: Merozoite surface protein 2 (300 aa).

The first 20 residues, 1 to 20, serve as a signal peptide directing secretion; it reads MKVIKTLSIINFFIFVTFNI. N-linked (GlcNAc...) asparagine glycans are attached at residues asparagine 22 and asparagine 36. Positions 44-226 are polymorphic region; the sequence is EESKPPTGAV…EQTESPELQS (183 aa). One copy of the 1; inverted repeat lies at 51-58; sequence GAVAGSGA. The interval 51 to 74 is 7 X 8 AA tandem repeats of G-S-G-A-G-A-V-A; that stretch reads GAVAGSGAGAGSGAGAVAGSGAGA. 5 consecutive repeat copies span residues 61–68, 69–76, 77–84, 85–92, and 93–100. One copy of the 7; inverted repeat lies at 103-110; it reads GAVAGSGA. The tract at residues 111 to 261 is disordered; the sequence is GNGANPGADA…DSQKECTDGN (151 aa). Residues 124–148 are compositionally biased toward low complexity; that stretch reads PSTPATTTTTTTTNDAEASTSTSSE. The segment covering 149-165 has biased composition (basic and acidic residues); the sequence is NRNHNNAETNPKGKGEV. 2 stretches are compositionally biased toward polar residues: residues 167–193 and 200–228; these read KPNQ…NVPR and KSPT…QSAP. A glycan (N-linked (GlcNAc...) asparagine) is linked at asparagine 177. A glycan (N-linked (GlcNAc...) asparagine) is linked at asparagine 249. Cysteine 257 and cysteine 265 are disulfide-bonded. N-linked (GlcNAc...) asparagine glycans are attached at residues asparagine 273 and asparagine 274. Residue asparagine 274 is the site of GPI-anchor amidated asparagine attachment. The propeptide at 275-300 is removed in mature form; that stretch reads SSNIASINKFVVLISATLVLSFAIFI.

It is found in the cell membrane. Its function is as follows. May play a role in the merozoite attachment to the erythrocyte. The polypeptide is Merozoite surface protein 2 (Plasmodium falciparum (isolate mad71 / Papua New Guinea)).